The primary structure comprises 219 residues: Mediator of RNA polymerase II transcription subunit 21 (219 aa).

Residues 86 to 125 (SAEEQLHKIDSLQKKLVDIEDEKIHAIKKKDDLLKQVDDL) are a coiled coil. The tract at residues 141 to 219 (SLAPENVQED…ISESISPGKI (79 aa)) is disordered. Composition is skewed to basic and acidic residues over residues 166–181 (IEQK…KIEG) and 191–204 (SDSK…FMDK). Polar residues predominate over residues 210 to 219 (ISESISPGKI).

Belongs to the Mediator complex subunit 21 family. As to quaternary structure, component of the Mediator complex.

Its subcellular location is the nucleus. Its function is as follows. Component of the Mediator complex, a coactivator involved in the regulated transcription of nearly all RNA polymerase II-dependent genes. Mediator functions as a bridge to convey information from gene-specific regulatory proteins to the basal RNA polymerase II transcription machinery. Mediator is recruited to promoters by direct interactions with regulatory proteins and serves as a scaffold for the assembly of a functional preinitiation complex with RNA polymerase II and the general transcription factors. This Candida glabrata (strain ATCC 2001 / BCRC 20586 / JCM 3761 / NBRC 0622 / NRRL Y-65 / CBS 138) (Yeast) protein is Mediator of RNA polymerase II transcription subunit 21 (SRB7).